A 330-amino-acid polypeptide reads, in one-letter code: D-alanine--D-alanine ligase (330 aa).

An ATP-grasp domain is found at 122–323; sequence NRFLSGFGIR…MKEVLCTIIR (202 aa). 151–206 is an ATP binding site; that stretch reads IARMGLPLFVKPNVGGSSIATTKVVEAAQLLPAIEQAFSEGEEVMIERLICGTEVT. Mg(2+) is bound by residues D277, E290, and N292.

It belongs to the D-alanine--D-alanine ligase family. It depends on Mg(2+) as a cofactor. Mn(2+) is required as a cofactor.

The protein resides in the cytoplasm. The catalysed reaction is 2 D-alanine + ATP = D-alanyl-D-alanine + ADP + phosphate + H(+). It participates in cell wall biogenesis; peptidoglycan biosynthesis. Cell wall formation. The polypeptide is D-alanine--D-alanine ligase (Porphyromonas gingivalis (strain ATCC BAA-308 / W83)).